A 94-amino-acid polypeptide reads, in one-letter code: Co-chaperonin GroES (94 aa).

As to quaternary structure, heptamer of 7 subunits arranged in a ring. Interacts with the chaperonin GroEL.

It localises to the cytoplasm. Its function is as follows. Together with the chaperonin GroEL, plays an essential role in assisting protein folding. The GroEL-GroES system forms a nano-cage that allows encapsulation of the non-native substrate proteins and provides a physical environment optimized to promote and accelerate protein folding. GroES binds to the apical surface of the GroEL ring, thereby capping the opening of the GroEL channel. In Thermoanaerobacter brockii (Thermoanaerobium brockii), this protein is Co-chaperonin GroES.